We begin with the raw amino-acid sequence, 230 residues long: ATP synthase subunit a (230 aa).

Transmembrane regions (helical) follow at residues Leu17–Ala37, Ile78–Ile98, Asp107–Ile127, Leu165–Val187, and Glu198–Ile218.

The protein belongs to the ATPase A chain family. As to quaternary structure, F-type ATPases have 2 components, CF(1) - the catalytic core - and CF(0) - the membrane proton channel. CF(1) has five subunits: alpha(3), beta(3), gamma(1), delta(1), epsilon(1). CF(0) has three main subunits: a(1), b(2) and c(9-12). The alpha and beta chains form an alternating ring which encloses part of the gamma chain. CF(1) is attached to CF(0) by a central stalk formed by the gamma and epsilon chains, while a peripheral stalk is formed by the delta and b chains.

Its subcellular location is the cell inner membrane. Functionally, key component of the proton channel; it plays a direct role in the translocation of protons across the membrane. This is ATP synthase subunit a from Legionella pneumophila subsp. pneumophila (strain Philadelphia 1 / ATCC 33152 / DSM 7513).